Consider the following 255-residue polypeptide: Putative oxidoreductase YtkK (255 aa).

Residue 7-14 (TAGSKGLG) coordinates NAD(+).

The protein belongs to the short-chain dehydrogenases/reductases (SDR) family.

The protein is Putative oxidoreductase YtkK (ytkK) of Bacillus subtilis (strain 168).